We begin with the raw amino-acid sequence, 501 residues long: Ribose import ATP-binding protein RbsA (501 aa).

2 consecutive ABC transporter domains span residues 5 to 241 (LELK…VGRK) and 249 to 495 (LNLP…VGKQ). 37–44 (GENGAGKS) is an ATP binding site.

It belongs to the ABC transporter superfamily. Ribose importer (TC 3.A.1.2.1) family. As to quaternary structure, the complex is composed of an ATP-binding protein (RbsA), two transmembrane proteins (RbsC) and a solute-binding protein (RbsB).

The protein resides in the cell inner membrane. It carries out the reaction D-ribose(out) + ATP + H2O = D-ribose(in) + ADP + phosphate + H(+). Part of the ABC transporter complex RbsABC involved in ribose import. Responsible for energy coupling to the transport system. The polypeptide is Ribose import ATP-binding protein RbsA (Photorhabdus laumondii subsp. laumondii (strain DSM 15139 / CIP 105565 / TT01) (Photorhabdus luminescens subsp. laumondii)).